The following is a 405-amino-acid chain: UDP-N-acetylglucosamine--N-acetylmuramyl-(pentapeptide) pyrophosphoryl-undecaprenol N-acetylglucosamine transferase (405 aa).

UDP-N-acetyl-alpha-D-glucosamine is bound by residues 11–13 (TGG), Asn-127, Arg-168, Ser-191, Ile-248, and Gln-293.

This sequence belongs to the glycosyltransferase 28 family. MurG subfamily.

The protein localises to the cell inner membrane. The catalysed reaction is di-trans,octa-cis-undecaprenyl diphospho-N-acetyl-alpha-D-muramoyl-L-alanyl-D-glutamyl-meso-2,6-diaminopimeloyl-D-alanyl-D-alanine + UDP-N-acetyl-alpha-D-glucosamine = di-trans,octa-cis-undecaprenyl diphospho-[N-acetyl-alpha-D-glucosaminyl-(1-&gt;4)]-N-acetyl-alpha-D-muramoyl-L-alanyl-D-glutamyl-meso-2,6-diaminopimeloyl-D-alanyl-D-alanine + UDP + H(+). It functions in the pathway cell wall biogenesis; peptidoglycan biosynthesis. Cell wall formation. Catalyzes the transfer of a GlcNAc subunit on undecaprenyl-pyrophosphoryl-MurNAc-pentapeptide (lipid intermediate I) to form undecaprenyl-pyrophosphoryl-MurNAc-(pentapeptide)GlcNAc (lipid intermediate II). In Sorangium cellulosum (strain So ce56) (Polyangium cellulosum (strain So ce56)), this protein is UDP-N-acetylglucosamine--N-acetylmuramyl-(pentapeptide) pyrophosphoryl-undecaprenol N-acetylglucosamine transferase.